The primary structure comprises 145 residues: Synaptojanin-2-binding protein (145 aa).

At 1-117 (MNGRVDYLVT…GPQGEGEPSG (117 aa)) the chain is on the cytoplasmic side. Residues 13 to 100 (EINLTRGPSG…AVSLRVQHRL (88 aa)) enclose the PDZ domain. The chain crosses the membrane as a helical; Anchor for type IV membrane protein span at residues 118–138 (IPIAMVLVPVFALTMVAAWAF). Residues 139-145 (MRYRQRL) lie on the Mitochondrial intermembrane side of the membrane.

In terms of assembly, binds (via the PDZ domain) to isoform 2A of SYNJ2 (via the unique motif in the C-terminus). Interacts (via C-terminus) with RALBP1. Interacts (via PDZ domain) with ACVR2A (via C-terminus) and ACVR2B (via C-terminus). Forms a ternary complex with ACVR2A and RALBP1. Interacts with MAPK12. Interacts with DLL1; enhances DLL1 protein stability, and promotes notch signaling in endothelial cells.

It is found in the mitochondrion outer membrane. It localises to the cytoplasm. The protein localises to the perinuclear region. Its function is as follows. Regulates endocytosis of activin type 2 receptor kinases through the Ral/RALBP1-dependent pathway and may be involved in suppression of activin-induced signal transduction. The polypeptide is Synaptojanin-2-binding protein (Bos taurus (Bovine)).